A 358-amino-acid chain; its full sequence is Snurportin-1 (358 aa).

An N-acetylmethionine modification is found at methionine 1. 2 disordered regions span residues 1-39 (MEEL…SSLE) and 69-89 (DWTG…EMDL). The tract at residues 1 to 65 (MEELSQALAS…LDYVNHARRL (65 aa)) is necessary for interaction with KPNB1 and m3G-cap U1 and U5 snRNP import receptor activity. The interval 1 to 160 (MEELSQALAS…NRFSSLLPGG (160 aa)) is necessary for interaction with XPO1. Polar residues-rich tracts occupy residues 7-22 (ALAS…NSTA) and 30-39 (QYKSKYSSLE). The IBB domain occupies 11 to 73 (SFSVSQELNS…RLAEDDWTGM (63 aa)). Serine 75 carries the phosphoserine modification. The interval 128-130 (GKR) is interaction with m3G-cap structure. The interval 210–329 (MNSKLPEEEG…DTKEKLTHKA (120 aa)) is necessary for binding to the m3G-cap structure. Positions 315 to 341 (KRSQEDTKEKLTHKASENGHYELEHLS) are enriched in basic and acidic residues. A disordered region spans residues 315-358 (KRSQEDTKEKLTHKASENGHYELEHLSTPKLRSPPHSSESLMDS). The span at 349–358 (PHSSESLMDS) shows a compositional bias: polar residues. Serine 351 is modified (phosphoserine).

It belongs to the snurportin family. Component of an import snRNP complex composed of KPNB1, SNUPN, SMN1 and ZNF259. Component of a nuclear export receptor complex composed of KPNB1, Ran, SNUPN and XPO1. Found in a trimeric export complex with SNUPN, Ran and XPO1. Interacts (via IBB domain) with KPNB1; the interaction is direct. Interacts with DDX20, IPO7, SMN1, SNRPB and XPO1. Interacts directly with XPO1. Its interaction with XPO1 and binding to m3G-cap U snRNPs appears to be mutually exclusive. Can form homomers.

The protein resides in the nucleus. It is found in the cytoplasm. In terms of biological role, functions as an U snRNP-specific nuclear import adapter. Involved in the trimethylguanosine (m3G)-cap-dependent nuclear import of U snRNPs. Binds specifically to the terminal m3G-cap U snRNAs. The chain is Snurportin-1 (Snupn) from Rattus norvegicus (Rat).